A 700-amino-acid polypeptide reads, in one-letter code: Pentatricopeptide repeat-containing protein At3g26540 (700 aa).

PPR repeat units follow at residues 95–125, 126–160, 161–195, 196–226, 227–261, 262–296, 297–327, 328–362, 363–389, 394–428, 429–459, 461–495, 497–529, 530–560, 561–595, 596–626, and 632–662; these read PIFLLNRAIEAYGKCGCVDDARELFEEMPER, DGGSWNAVITACAQNGVSDEVFRMFRRMNRDGVRA, TETSFAGVLKSCGLILDLRLLRQLHCAVVKYGYSG, NVDLETSIVDVYGKCRVMSDARRVFDEIVNP, SDVSWNVIVRRYLEMGFNDEAVVMFFKMLELNVRP, LNHTVSSVMLACSRSLALEVGKVIHAIAVKLSVVA, DTVVSTSVFDMYVKCDRLESARRVFDQTRSK, DLKSWTSAMSGYAMSGLTREARELFDLMPERNIVS, WNAMLGGYVHAHEWDEALDFLTLMRQE, DNVTLVWILNVCSGISDVQMGKQAHGFIYRHGYDT, NVIVANALLDMYGKCGTLQSANIWFRQMSEL, DEVSWNALLTGVARVGRSEQALSFFEGMQVEAKPS, YTLATLLAGCANIPALNLGKAIHGFLIRDGYKI, DVVIRGAMVDMYSKCRCFDYAIEVFKEAATR, DLILWNSIIRGCCRNGRSKEVFELFMLLENEGVKP, DHVTFLGILQACIREGHVELGFQYFSSMSTK, and QVEHYDCMIELYCKYGCLHQLEEFLLLMPFD.

The protein belongs to the PPR family. PCMP-A subfamily.

The protein is Pentatricopeptide repeat-containing protein At3g26540 (PCMP-A5) of Arabidopsis thaliana (Mouse-ear cress).